The primary structure comprises 192 residues: Probable nicotinate-nucleotide adenylyltransferase (192 aa).

This sequence belongs to the NadD family.

It catalyses the reaction nicotinate beta-D-ribonucleotide + ATP + H(+) = deamido-NAD(+) + diphosphate. Its pathway is cofactor biosynthesis; NAD(+) biosynthesis; deamido-NAD(+) from nicotinate D-ribonucleotide: step 1/1. In terms of biological role, catalyzes the reversible adenylation of nicotinate mononucleotide (NaMN) to nicotinic acid adenine dinucleotide (NaAD). This chain is Probable nicotinate-nucleotide adenylyltransferase, found in Staphylococcus haemolyticus (strain JCSC1435).